Here is a 415-residue protein sequence, read N- to C-terminus: Histidine--tRNA ligase (415 aa).

Belongs to the class-II aminoacyl-tRNA synthetase family. Homodimer.

The protein localises to the cytoplasm. The catalysed reaction is tRNA(His) + L-histidine + ATP = L-histidyl-tRNA(His) + AMP + diphosphate + H(+). The sequence is that of Histidine--tRNA ligase from Clostridium botulinum (strain Loch Maree / Type A3).